We begin with the raw amino-acid sequence, 99 residues long: MFAIIKTSGRQLKVEKDQTIFVEKIDKNEGETITFTDILFINGKIGTPYVENASVTGIIEKQGKAKKIVVYRHNPKSTHKRKLGHRQLFTKVKITELKG.

Belongs to the bacterial ribosomal protein bL21 family. Part of the 50S ribosomal subunit. Contacts protein L20.

Its function is as follows. This protein binds to 23S rRNA in the presence of protein L20. This chain is Large ribosomal subunit protein bL21, found in Mesomycoplasma hyopneumoniae (strain 232) (Mycoplasma hyopneumoniae).